Reading from the N-terminus, the 1337-residue chain is Nucleoporin POM152 (1337 aa).

The disordered stretch occupies residues 1–48; it reads MEHRYNVFNDTPRGNHWMGSSVSGSPRPSYSSRPNVNTTRRFQYSDDE. Topologically, residues 1-110 are cytoplasmic; the sequence is MEHRYNVFND…TDVLEISKQR (110 aa). The interval 1–175 is pore side; it reads MEHRYNVFND…SFNIPRLTFK (175 aa). Low complexity predominate over residues 19–37; it reads GSSVSGSPRPSYSSRPNVN. Residues serine 45 and serine 60 each carry the phosphoserine modification. Residues 111-131 traverse the membrane as a helical segment; sequence TFAVILFLIIQCYKIYDLVIL. Topologically, residues 132–148 are perinuclear space; the sequence is KSGLPLSGLLFKNYRFN. The chain crosses the membrane as a helical span at residues 149–169; that stretch reads FISKYFIIDSFFLYVLPSFNI. Topologically, residues 170–172 are cytoplasmic; that stretch reads PRL. Residues 173–193 form a helical membrane-spanning segment; sequence TFKPWVVYLQILAMLLLNIFI. Over 194–1337 the chain is Perinuclear space; that stretch reads SSDHEFVLIS…FAKNDLFFNN (1144 aa). Residues 196 to 1337 are cisternal side; it reads DHEFVLISLI…FAKNDLFFNN (1142 aa). N-linked (GlcNAc...) asparagine glycosylation occurs at asparagine 280. 8 consecutive repeat copies span residues 390 to 413, 626 to 650, 732 to 755, 836 to 859, 943 to 966, 1058 to 1077, 1157 to 1178, and 1253 to 1276. Residues 390 to 1276 form an 8 X 24 AA approximate repeats region; sequence DRCIGDSDNV…EGTPPFSLTY (887 aa).

In terms of assembly, component of the nuclear pore complex (NPC). NPC constitutes the exclusive means of nucleocytoplasmic transport. NPCs allow the passive diffusion of ions and small molecules and the active, nuclear transport receptor-mediated bidirectional transport of macromolecules such as proteins, RNAs, ribonucleoparticles (RNPs), and ribosomal subunits across the nuclear envelope. Due to its 8-fold rotational symmetry, all subunits are present with 8 copies or multiples thereof. Interacts with NUP188. The N-terminus is blocked. Post-translationally, phosphorylated by CDC28.

The protein resides in the nucleus. It is found in the nuclear pore complex. Its subcellular location is the nucleus membrane. Functions as a component of the nuclear pore complex (NPC). NPC components, collectively referred to as nucleoporins (NUPs), can play the role of both NPC structural components and of docking or interaction partners for transiently associated nuclear transport factors. POM152 is important for the de novo assembly of NPCs. This Saccharomyces cerevisiae (strain ATCC 204508 / S288c) (Baker's yeast) protein is Nucleoporin POM152 (POM152).